A 250-amino-acid polypeptide reads, in one-letter code: Homeobox protein DLL-1 (250 aa).

2 disordered regions span residues 40 to 66 (YPSL…SGSN) and 84 to 106 (SPYL…PDQQ). Residues 84–98 (SPYLQSCNSNTTTQS) show a composition bias toward polar residues. The segment at residues 125–184 (IRKPRTIYSSLQLQALNHRFQQTQYLALPERAELAASLGVTQTQVKIWFQNKRSKYKKLI) is a DNA-binding region (homeobox).

The protein belongs to the distal-less homeobox family.

The protein resides in the nucleus. This Xenopus laevis (African clawed frog) protein is Homeobox protein DLL-1 (dll1).